The following is a 404-amino-acid chain: Argininosuccinate synthase (404 aa).

Residues Ala-12–Ser-20 and Ala-39 each bind ATP. 2 residues coordinate L-citrulline: Tyr-91 and Ser-96. Gly-121 is an ATP binding site. 3 residues coordinate L-aspartate: Thr-123, Asn-127, and Asp-128. L-citrulline is bound at residue Asn-127. Positions 131, 180, 189, 265, and 277 each coordinate L-citrulline.

This sequence belongs to the argininosuccinate synthase family. Type 1 subfamily. As to quaternary structure, homotetramer.

Its subcellular location is the cytoplasm. The enzyme catalyses L-citrulline + L-aspartate + ATP = 2-(N(omega)-L-arginino)succinate + AMP + diphosphate + H(+). The protein operates within amino-acid biosynthesis; L-arginine biosynthesis; L-arginine from L-ornithine and carbamoyl phosphate: step 2/3. This chain is Argininosuccinate synthase, found in Vibrio campbellii (strain ATCC BAA-1116).